The primary structure comprises 75 residues: MYB-like transcription factor ETC3 (75 aa).

The disordered stretch occupies residues 1-20 (MDNHRRTKQPKTNSIVTSSS). The Myb-like domain occupies 34–71 (SQEEEDLVSRMHKLVGDRWELIAGRIPGRTAGEIERFW).

As to expression, expressed in leaf epidermal cells, stomate guard cells in leaves, cotyledons and hypocotyls, inflorescences, developing seeds and siliques.

It localises to the nucleus. MYB-type transcription factor involved in epidermal cell fate specification. Acts as a negative regulator of trichome development, including endoreplication, by mediating lateral inhibition. Promotes the formation of hair developing cells in H position in root epidermis, probably by inhibiting non-hair cell formation. May have pleiotropic effects on flowering development and epidermal cell size through the regulation of endoreduplication. The protein is MYB-like transcription factor ETC3 (ETC3) of Arabidopsis thaliana (Mouse-ear cress).